The sequence spans 157 residues: Small ribosomal subunit protein uS7 (157 aa).

The protein belongs to the universal ribosomal protein uS7 family. As to quaternary structure, part of the 30S ribosomal subunit. Contacts proteins S9 and S11.

Functionally, one of the primary rRNA binding proteins, it binds directly to 16S rRNA where it nucleates assembly of the head domain of the 30S subunit. Is located at the subunit interface close to the decoding center, probably blocks exit of the E-site tRNA. The chain is Small ribosomal subunit protein uS7 from Psychrobacter cryohalolentis (strain ATCC BAA-1226 / DSM 17306 / VKM B-2378 / K5).